The following is a 568-amino-acid chain: Methionine--tRNA ligase (568 aa).

The 'HIGH' region motif lies at 10–20 (PYVQSVPHLGN). 4 residues coordinate Zn(2+): Cys-143, Cys-146, Cys-156, and Cys-159. Residues 333 to 337 (KFSKS) carry the 'KMSKS' region motif. Lys-336 is an ATP binding site.

The protein belongs to the class-I aminoacyl-tRNA synthetase family. MetG type 1 subfamily. It depends on Zn(2+) as a cofactor.

Its subcellular location is the cytoplasm. The enzyme catalyses tRNA(Met) + L-methionine + ATP = L-methionyl-tRNA(Met) + AMP + diphosphate. Its function is as follows. Is required not only for elongation of protein synthesis but also for the initiation of all mRNA translation through initiator tRNA(fMet) aminoacylation. In Metallosphaera sedula (strain ATCC 51363 / DSM 5348 / JCM 9185 / NBRC 15509 / TH2), this protein is Methionine--tRNA ligase.